Here is a 590-residue protein sequence, read N- to C-terminus: Proline--tRNA ligase (590 aa).

This sequence belongs to the class-II aminoacyl-tRNA synthetase family. ProS type 1 subfamily. Homodimer.

It is found in the cytoplasm. The enzyme catalyses tRNA(Pro) + L-proline + ATP = L-prolyl-tRNA(Pro) + AMP + diphosphate. Catalyzes the attachment of proline to tRNA(Pro) in a two-step reaction: proline is first activated by ATP to form Pro-AMP and then transferred to the acceptor end of tRNA(Pro). As ProRS can inadvertently accommodate and process non-cognate amino acids such as alanine and cysteine, to avoid such errors it has two additional distinct editing activities against alanine. One activity is designated as 'pretransfer' editing and involves the tRNA(Pro)-independent hydrolysis of activated Ala-AMP. The other activity is designated 'posttransfer' editing and involves deacylation of mischarged Ala-tRNA(Pro). The misacylated Cys-tRNA(Pro) is not edited by ProRS. The polypeptide is Proline--tRNA ligase (Leifsonia xyli subsp. xyli (strain CTCB07)).